The following is a 199-amino-acid chain: Superoxide dismutase [Mn/Fe] 1 (199 aa).

Fe(3+)-binding residues include H27, H81, D161, and H165. Positions 27, 81, 161, and 165 each coordinate Mn(2+).

This sequence belongs to the iron/manganese superoxide dismutase family. Homodimer. Can also form a heterodimer with SodM. Mn(2+) is required as a cofactor. Requires Fe(3+) as cofactor.

The catalysed reaction is 2 superoxide + 2 H(+) = H2O2 + O2. Its function is as follows. Destroys superoxide anion radicals which are normally produced within the cells and which are toxic to biological systems. Catalyzes the dismutation of superoxide anion radicals into O2 and H2O2 by successive reduction and oxidation of the transition metal ion at the active site. The polypeptide is Superoxide dismutase [Mn/Fe] 1 (sodA) (Staphylococcus aureus (strain USA300)).